Reading from the N-terminus, the 197-residue chain is Imidazoleglycerol-phosphate dehydratase (197 aa).

The protein belongs to the imidazoleglycerol-phosphate dehydratase family.

The protein resides in the cytoplasm. It catalyses the reaction D-erythro-1-(imidazol-4-yl)glycerol 3-phosphate = 3-(imidazol-4-yl)-2-oxopropyl phosphate + H2O. It functions in the pathway amino-acid biosynthesis; L-histidine biosynthesis; L-histidine from 5-phospho-alpha-D-ribose 1-diphosphate: step 6/9. The chain is Imidazoleglycerol-phosphate dehydratase from Chromohalobacter salexigens (strain ATCC BAA-138 / DSM 3043 / CIP 106854 / NCIMB 13768 / 1H11).